The chain runs to 297 residues: uncharacterized protein (297 aa).

The segment at 136–174 is disordered; the sequence is FSETNDDSTDEEIDTPINDDDDDDKNNDADNNDINEDNK. A compositionally biased stretch (acidic residues) spans 139 to 170; the sequence is TNDDSTDEEIDTPINDDDDDDKNNDADNNDIN.

This sequence to S.pombe SpBC725.03.

This is an uncharacterized protein from Saccharomyces cerevisiae (strain ATCC 204508 / S288c) (Baker's yeast).